The chain runs to 536 residues: Phosphoenolpyruvate carboxykinase (ATP) (536 aa).

Residues arginine 61, tyrosine 195, and lysine 201 each coordinate substrate. Residues lysine 201, histidine 220, and 236–244 contribute to the ATP site; that span reads GLSGTGKTT. Residues lysine 201 and histidine 220 each coordinate Mn(2+). A Mn(2+)-binding site is contributed by aspartate 257. The ATP site is built by glutamate 285, arginine 322, and threonine 447. Residue arginine 322 participates in substrate binding.

This sequence belongs to the phosphoenolpyruvate carboxykinase (ATP) family. Mn(2+) is required as a cofactor.

Its subcellular location is the cytoplasm. The enzyme catalyses oxaloacetate + ATP = phosphoenolpyruvate + ADP + CO2. It participates in carbohydrate biosynthesis; gluconeogenesis. Involved in the gluconeogenesis. Catalyzes the conversion of oxaloacetate (OAA) to phosphoenolpyruvate (PEP) through direct phosphoryl transfer between the nucleoside triphosphate and OAA. The chain is Phosphoenolpyruvate carboxykinase (ATP) from Rhizobium etli (strain CIAT 652).